The primary structure comprises 928 residues: Receptor-like kinase TMK4 (928 aa).

The N-terminal stretch at 1–24 (MEAPTPLLLLVLLTTITFFTTSVA) is a signal peptide. At 25–472 (DDQTAMLALA…GGSSGGGGSK (448 aa)) the chain is on the extracellular side. C51 and C58 are joined by a disulfide. 10 LRR repeats span residues 61–84 (GRVT…ISTL), 85–107 (SELK…FAKL), 108–130 (SSLQ…AFAG), 132–157 (TSLQ…LVDS), 158–180 (TSLT…IFDS), 181–205 (LASL…LGKS), 207–229 (IQNL…LSSM), 230–251 (TSLS…DLSK), 252–276 (SENL…LLTL), and 278–298 (SLKN…LFSP). Residue N144 is glycosylated (N-linked (GlcNAc...) asparagine). N-linked (GlcNAc...) asparagine glycosylation occurs at N193. N281 is a glycosylation site (N-linked (GlcNAc...) asparagine). Intrachain disulfides connect C310–C318 and C348–C356. LRR repeat units follow at residues 360–383 (GKNV…AIAN), 384–407 (LTSL…ELTF), and 408–435 (MTSL…VKFS). The N-linked (GlcNAc...) asparagine glycan is linked to N383. A disordered region spans residues 445–465 (TNGGDGSSPGTGGASGGPGGS). A helical transmembrane segment spans residues 473-493 (VGVIVGVIVAVLVFLAILGFV). The Cytoplasmic portion of the chain corresponds to 494–928 (VYKFVMKRKY…PNTFDSADGR (435 aa)). The Protein kinase domain maps to 578–858 (FSEDNILGRG…HAVNVLGPLV (281 aa)). ATP contacts are provided by residues 584 to 592 (LGRGGFGVV) and K606. The active-site Proton acceptor is the D707. Polar residues-rich tracts occupy residues 898 to 911 (FHGD…QSSI) and 918 to 928 (FPNTFDSADGR). Positions 898-928 (FHGDFSYSQTQSSIPPKASGFPNTFDSADGR) are disordered.

Belongs to the protein kinase superfamily. Ser/Thr protein kinase family. Interacts with BAK1 (via kinase domain), SERK4 and SERK5. In terms of tissue distribution, expressed in roots, leaves, stems, siliques and flowers. Ubiquitous, with a high expression in mature pollen grains and in the pericycle and the xylem vasculature of the primary and lateral roots.

Its subcellular location is the membrane. The catalysed reaction is L-seryl-[protein] + ATP = O-phospho-L-seryl-[protein] + ADP + H(+). The enzyme catalyses L-threonyl-[protein] + ATP = O-phospho-L-threonyl-[protein] + ADP + H(+). Functionally, involved in auxin signal transduction and cell expansion and proliferation regulation. May be involved in brassinosteroid-mediated plant growth and development via auxin regulation. May be involved in microspore and pollen development. This chain is Receptor-like kinase TMK4, found in Arabidopsis thaliana (Mouse-ear cress).